We begin with the raw amino-acid sequence, 129 residues long: MAKAPTRARKRVRKQVSDGIAHVHASFNNTIVTITDRQGNALSWATAGGSGFRGSRKSTPFAAQVAAERAGEIAKEYGVKNLEVMVKGPGPGRESSIRALNAAGFRITNITDVTPIPHNGCRPPKKRRV.

Belongs to the universal ribosomal protein uS11 family. In terms of assembly, part of the 30S ribosomal subunit. Interacts with proteins S7 and S18. Binds to IF-3.

Functionally, located on the platform of the 30S subunit, it bridges several disparate RNA helices of the 16S rRNA. Forms part of the Shine-Dalgarno cleft in the 70S ribosome. This Tolumonas auensis (strain DSM 9187 / NBRC 110442 / TA 4) protein is Small ribosomal subunit protein uS11.